The sequence spans 418 residues: Tyrosine--tRNA ligase (418 aa).

L-tyrosine is bound at residue Tyr34. The 'HIGH' region signature appears at Pro39 to His48. Tyr169 and Gln173 together coordinate L-tyrosine. Residues Lys229–Ser233 carry the 'KMSKS' region motif. Lys232 lines the ATP pocket. Positions Leu352–Tyr418 constitute an S4 RNA-binding domain.

Belongs to the class-I aminoacyl-tRNA synthetase family. TyrS type 1 subfamily. As to quaternary structure, homodimer.

It is found in the cytoplasm. The catalysed reaction is tRNA(Tyr) + L-tyrosine + ATP = L-tyrosyl-tRNA(Tyr) + AMP + diphosphate + H(+). Its function is as follows. Catalyzes the attachment of tyrosine to tRNA(Tyr) in a two-step reaction: tyrosine is first activated by ATP to form Tyr-AMP and then transferred to the acceptor end of tRNA(Tyr). This chain is Tyrosine--tRNA ligase, found in Streptococcus pyogenes serotype M3 (strain SSI-1).